Reading from the N-terminus, the 281-residue chain is Pantothenate synthetase (281 aa).

30 to 37 (MGNLHQGH) contacts ATP. H37 acts as the Proton donor in catalysis. Position 61 (Q61) interacts with (R)-pantoate. Q61 is a binding site for beta-alanine. 149-152 (GNKD) lines the ATP pocket. Q155 contacts (R)-pantoate. ATP contacts are provided by residues I178 and 186 to 189 (MSSR).

This sequence belongs to the pantothenate synthetase family. Homodimer.

It localises to the cytoplasm. It catalyses the reaction (R)-pantoate + beta-alanine + ATP = (R)-pantothenate + AMP + diphosphate + H(+). Its pathway is cofactor biosynthesis; (R)-pantothenate biosynthesis; (R)-pantothenate from (R)-pantoate and beta-alanine: step 1/1. Its function is as follows. Catalyzes the condensation of pantoate with beta-alanine in an ATP-dependent reaction via a pantoyl-adenylate intermediate. This is Pantothenate synthetase from Shewanella oneidensis (strain ATCC 700550 / JCM 31522 / CIP 106686 / LMG 19005 / NCIMB 14063 / MR-1).